The sequence spans 58 residues: Large ribosomal subunit protein bL32 (58 aa).

This sequence belongs to the bacterial ribosomal protein bL32 family.

The chain is Large ribosomal subunit protein bL32 from Thermobifida fusca (strain YX).